The sequence spans 313 residues: Acetaldehyde dehydrogenase (313 aa).

Residue 15–18 participates in NAD(+) binding; sequence SGNI. Residue cysteine 133 is the Acyl-thioester intermediate of the active site. NAD(+)-binding positions include 164–172 and asparagine 289; that span reads SAGPGTRAN.

Belongs to the acetaldehyde dehydrogenase family.

It catalyses the reaction acetaldehyde + NAD(+) + CoA = acetyl-CoA + NADH + H(+). In Rhizobium rhizogenes (strain K84 / ATCC BAA-868) (Agrobacterium radiobacter), this protein is Acetaldehyde dehydrogenase.